Consider the following 183-residue polypeptide: Potassium-transporting ATPase KdpC subunit (183 aa).

Residues 11–31 (LALLMTLLTGVLYPLAVTGVA) form a helical membrane-spanning segment.

The protein belongs to the KdpC family. In terms of assembly, the system is composed of three essential subunits: KdpA, KdpB and KdpC.

Its subcellular location is the cell inner membrane. Functionally, part of the high-affinity ATP-driven potassium transport (or Kdp) system, which catalyzes the hydrolysis of ATP coupled with the electrogenic transport of potassium into the cytoplasm. This subunit acts as a catalytic chaperone that increases the ATP-binding affinity of the ATP-hydrolyzing subunit KdpB by the formation of a transient KdpB/KdpC/ATP ternary complex. The protein is Potassium-transporting ATPase KdpC subunit of Pseudomonas putida (strain GB-1).